A 243-amino-acid polypeptide reads, in one-letter code: UPF0702 transmembrane protein YkjA (243 aa).

3 helical membrane passes run 3-23 (WMVWVFLLKPVIVFSIAYILF), 34-54 (MNNFDLLLTFAIGTIISEPIL), and 58-78 (LPMSIYYAGAFLVLYLIMSKL).

Belongs to the UPF0702 family.

The protein resides in the cell membrane. This chain is UPF0702 transmembrane protein YkjA (ykjA), found in Bacillus subtilis (strain 168).